The sequence spans 284 residues: Cell division protein DivIB (284 aa).

The segment at 1-21 is disordered; sequence MFGKRKDSKNKAMRDNEELTP. Over 1–63 the chain is Cytoplasmic; sequence MFGKRKDSKN…GLRKRRLQKR (63 aa). The chain crosses the membrane as a helical span at residues 64–84; it reads VITLASIFGISAIISLYAILP. At 85 to 284 the chain is on the extracellular side; it reads VSRVSNIEIE…VGAYAYPYBK (200 aa). In terms of domain architecture, POTRA spans 86–156; that stretch reads SRVSNIEIEG…NVVKFKVTEY (71 aa).

The protein belongs to the FtsQ/DivIB family. DivIB subfamily.

The protein localises to the cell membrane. Cell division protein that may be involved in stabilizing or promoting the assembly of the division complex. In Ligilactobacillus salivarius (strain CECT 5713) (Lactobacillus salivarius), this protein is Cell division protein DivIB.